The following is a 614-amino-acid chain: Chaperone protein HtpG (614 aa).

An a; substrate-binding region spans residues 1–324 (MSQIETKEFQ…SEELPLNISR (324 aa)). The segment at 325-537 (ETMQDSALIA…SHYGTHSMQR (213 aa)) is b. Residues 538–614 (MMQLMNRDLQ…LNEILEKALR (77 aa)) are c.

It belongs to the heat shock protein 90 family. As to quaternary structure, homodimer.

The protein resides in the cytoplasm. Molecular chaperone. Has ATPase activity. The polypeptide is Chaperone protein HtpG (Desulfitobacterium hafniense (strain Y51)).